Reading from the N-terminus, the 104-residue chain is MATIEFSPGIPEVPTQVRLLKSKTGKRGSAIFRFEELKSDTQSILGMRMIDEEGELTTRNIKAKFLNGEFKALEVIYDMETEAEWERFLRFMERFSAANQMGMA.

Belongs to the Psb28 family. Part of the photosystem II complex.

It localises to the cellular thylakoid membrane. The polypeptide is Photosystem II reaction center Psb28 protein (Synechococcus sp. (strain JA-3-3Ab) (Cyanobacteria bacterium Yellowstone A-Prime)).